Consider the following 489-residue polypeptide: Rhamnulokinase (489 aa).

13 to 17 (ASSGR) provides a ligand contact to ATP. A disulfide bridge links Cys68 with Cys222. Substrate contacts are provided by residues Gly83 and 236-238 (HDT). Asp237 acts as the Proton acceptor in catalysis. Thr259 provides a ligand contact to ATP. Asn296 contributes to the substrate binding site. Gln304 provides a ligand contact to ATP. The cysteines at positions 353 and 370 are disulfide-linked. Gly402 contacts ATP. A disulfide bridge links Cys413 with Cys417.

This sequence belongs to the rhamnulokinase family. Mg(2+) is required as a cofactor.

The catalysed reaction is L-rhamnulose + ATP = L-rhamnulose 1-phosphate + ADP + H(+). Its pathway is carbohydrate degradation; L-rhamnose degradation; glycerone phosphate from L-rhamnose: step 2/3. Involved in the catabolism of L-rhamnose (6-deoxy-L-mannose). Catalyzes the transfer of the gamma-phosphate group from ATP to the 1-hydroxyl group of L-rhamnulose to yield L-rhamnulose 1-phosphate. This is Rhamnulokinase from Salmonella typhi.